The sequence spans 341 residues: S-adenosylmethionine:tRNA ribosyltransferase-isomerase (341 aa).

It belongs to the QueA family. Monomer.

The protein resides in the cytoplasm. The enzyme catalyses 7-aminomethyl-7-carbaguanosine(34) in tRNA + S-adenosyl-L-methionine = epoxyqueuosine(34) in tRNA + adenine + L-methionine + 2 H(+). It functions in the pathway tRNA modification; tRNA-queuosine biosynthesis. Its function is as follows. Transfers and isomerizes the ribose moiety from AdoMet to the 7-aminomethyl group of 7-deazaguanine (preQ1-tRNA) to give epoxyqueuosine (oQ-tRNA). This Staphylococcus haemolyticus (strain JCSC1435) protein is S-adenosylmethionine:tRNA ribosyltransferase-isomerase.